A 95-amino-acid chain; its full sequence is Acylphosphatase (95 aa).

Residues 9–95 (RLTAWVHGRV…KGGLTGFVER (87 aa)) form the Acylphosphatase-like domain. Active-site residues include Arg-24 and Asn-42.

It belongs to the acylphosphatase family.

The catalysed reaction is an acyl phosphate + H2O = a carboxylate + phosphate + H(+). This chain is Acylphosphatase (acyP), found in Saccharopolyspora erythraea (strain ATCC 11635 / DSM 40517 / JCM 4748 / NBRC 13426 / NCIMB 8594 / NRRL 2338).